The chain runs to 344 residues: Golgi-associated RAB2 interactor protein 1B (344 aa).

The interval 271 to 293 (FRSSRKVETNKNSSGKDSSREDS) is disordered.

This sequence belongs to the GARIN family.

It is found in the golgi apparatus. In terms of biological role, RAB2B effector protein required for accurate acrosome formation and normal male fertility. In complex with RAB2A/RAB2B, seems to suppress excessive vesicle trafficking during acrosome formation. The polypeptide is Golgi-associated RAB2 interactor protein 1B (Homo sapiens (Human)).